Consider the following 921-residue polypeptide: Valine--tRNA ligase (921 aa).

Residues 40-50 (PNVTGSLHMGH) carry the 'HIGH' region motif. Residues 522 to 526 (KMSKS) carry the 'KMSKS' region motif. K525 lines the ATP pocket. Residues 849-921 (MADLIDKEAE…LQHKNRIESL (73 aa)) adopt a coiled-coil conformation.

It belongs to the class-I aminoacyl-tRNA synthetase family. ValS type 1 subfamily. As to quaternary structure, monomer.

It is found in the cytoplasm. The catalysed reaction is tRNA(Val) + L-valine + ATP = L-valyl-tRNA(Val) + AMP + diphosphate. Functionally, catalyzes the attachment of valine to tRNA(Val). As ValRS can inadvertently accommodate and process structurally similar amino acids such as threonine, to avoid such errors, it has a 'posttransfer' editing activity that hydrolyzes mischarged Thr-tRNA(Val) in a tRNA-dependent manner. This Legionella pneumophila (strain Lens) protein is Valine--tRNA ligase.